The following is a 243-amino-acid chain: Probable heat shock transcription factor (243 aa).

The DNA-binding element occupies 9–102 (INKFIRRLYK…GDNLLPCIQR (94 aa)). Positions 121-164 (QLQDLLQYLNNQNFKLEGEIKSLKDRVDQQDCTINGLVQLLTRI) are involved in trimerization.

It belongs to the HSF family. In terms of assembly, homotrimer. Homotrimerization increases the affinity of HSF1 to DNA.

It localises to the nucleus. DNA-binding transcription factor that specifically binds heat shock promoter elements (HSE) and activates transcription. The polypeptide is Probable heat shock transcription factor (Vairimorpha ceranae (strain BRL01) (Microsporidian parasite)).